The primary structure comprises 211 residues: Arginine exporter protein ArgO (211 aa).

The next 6 membrane-spanning stretches (helical) occupy residues 1-21, 37-57, 68-88, 111-131, 147-167, and 182-202; these read MFSY…PLGP, IMIA…GIFG, LLAL…FGAF, IIAT…DTFV, WFAL…AILA, and IINL…ARDG.

This sequence belongs to the LysE/ArgO transporter (TC 2.A.75) family.

Its subcellular location is the cell inner membrane. It carries out the reaction L-arginine(in) = L-arginine(out). Involved in the export of arginine. Important to control the intracellular level of arginine and the correct balance between arginine and lysine. The polypeptide is Arginine exporter protein ArgO (Escherichia coli O157:H7).